Here is a 388-residue protein sequence, read N- to C-terminus: uncharacterized protein (388 aa).

A run of 8 helical transmembrane segments spans residues 15–37 (VISA…LLVL), 97–119 (GFSK…VVFY), 129–151 (PIWG…TFLL), 158–175 (FIYI…FLSA), 179–196 (MMLA…VLFK), 203–225 (LAFW…YLSQ), 304–326 (IFIV…YIYF), and 347–369 (LLSV…DALL).

It is found in the cell membrane. This is an uncharacterized protein from Aquifex aeolicus (strain VF5).